A 1251-amino-acid chain; its full sequence is ATP-dependent helicase/nuclease subunit A (1251 aa).

The region spanning 5-481 (TKWTDEQWEA…IILSRNFRSR (477 aa)) is the UvrD-like helicase ATP-binding domain. 26–33 (AAAGAGKT) serves as a coordination point for ATP. A UvrD-like helicase C-terminal domain is found at 526–824 (TVGGEVEFHL…RIMSIHKSKG (299 aa)). The disordered stretch occupies residues 544–565 (NFTFENEGEEGRQADEGEEDEE).

This sequence belongs to the helicase family. AddA subfamily. In terms of assembly, heterodimer of AddA and AddB/RexB. The cofactor is Mg(2+).

It catalyses the reaction Couples ATP hydrolysis with the unwinding of duplex DNA by translocating in the 3'-5' direction.. It carries out the reaction ATP + H2O = ADP + phosphate + H(+). The heterodimer acts as both an ATP-dependent DNA helicase and an ATP-dependent, dual-direction single-stranded exonuclease. Recognizes the chi site generating a DNA molecule suitable for the initiation of homologous recombination. The AddA nuclease domain is required for chi fragment generation; this subunit has the helicase and 3' -&gt; 5' nuclease activities. The protein is ATP-dependent helicase/nuclease subunit A of Acetivibrio thermocellus (strain ATCC 27405 / DSM 1237 / JCM 9322 / NBRC 103400 / NCIMB 10682 / NRRL B-4536 / VPI 7372) (Clostridium thermocellum).